The sequence spans 282 residues: MAYNKESKQRRFLFAIDLDGTLLADSANGTVHPKTEEAIKKAVAQGHIVSIITGRPWRSTLPVYEKLGLNAIVGNYNGAHIHNPADPFFIPAITYLDLNEVLYILGDEKVKKEITNYAIEGPDWVQLMHRDPNLERVFGFNQATKFRECINLEKIPLKPTGIVFDVKPDTDVLELLTYLKRRYGDLGEFSSWSKGEGLSPVFDITSIGIDKGKVISLIMRYYNIDIDDTVAMGDSYNDLSMYNVANVCVSPANAEPLIKKMSTVVMKQTNKEGAVGYFIDHS.

The active-site Nucleophile is Asp17. Asp17 is a Mg(2+) binding site. A phosphate-binding site is contributed by Leu18. Residue Asp19 coordinates Mg(2+). Residues 53 to 54 and Lys211 each bind phosphate; that span reads TG. 2 residues coordinate Mg(2+): Asp234 and Ser235. Asn237 contributes to the phosphate binding site.

This sequence belongs to the HAD-like hydrolase superfamily. Cof family. Requires Mg(2+) as cofactor.

The polypeptide is Putative phosphatase in upp 3'region (Metamycoplasma hominis (Mycoplasma hominis)).